A 250-amino-acid chain; its full sequence is uncharacterized protein (250 aa).

Transmembrane regions (helical) follow at residues 36–56 (VALG…VPAV), 73–93 (PLYM…GFAM), 101–121 (AGAL…SVML), 128–148 (VAAT…FGYT), 156–176 (FGSF…VSIF), 180–200 (PALL…LIAY), and 225–245 (FGAL…LSFF).

It belongs to the BI1 family.

The protein resides in the cell membrane. This is an uncharacterized protein from Caulobacter vibrioides (strain ATCC 19089 / CIP 103742 / CB 15) (Caulobacter crescentus).